A 303-amino-acid chain; its full sequence is D-alanine--D-alanine ligase (303 aa).

One can recognise an ATP-grasp domain in the interval 104-300 (KLLWNAVGLP…FERLVERVLE (197 aa)). 132-187 (IAKLGLPLFVKPASEGSSVGVSKVKTAEQLLPAIEEALKYDSIVLVEENLAGAEYS) contributes to the ATP binding site. Asp254, Glu267, and Asn269 together coordinate Mg(2+).

The protein belongs to the D-alanine--D-alanine ligase family. The cofactor is Mg(2+). Mn(2+) serves as cofactor.

It localises to the cytoplasm. The catalysed reaction is 2 D-alanine + ATP = D-alanyl-D-alanine + ADP + phosphate + H(+). Its pathway is cell wall biogenesis; peptidoglycan biosynthesis. In terms of biological role, cell wall formation. The polypeptide is D-alanine--D-alanine ligase (Glaesserella parasuis serovar 5 (strain SH0165) (Haemophilus parasuis)).